We begin with the raw amino-acid sequence, 486 residues long: Serine/threonine-protein phosphatase 2A 56 kDa regulatory subunit alpha isoform (486 aa).

Ser2 carries the N-acetylserine modification. Positions 22-52 are disordered; that stretch reads DGFTRKSVRKAQRQKRSQGSSQFRSQGSQAE. The span at 27–37 shows a compositional bias: basic residues; it reads KSVRKAQRQKR. The span at 38 to 51 shows a compositional bias: low complexity; the sequence is SQGSSQFRSQGSQA. 3 positions are modified to phosphoserine: Ser41, Ser42, and Ser49.

It belongs to the phosphatase 2A regulatory subunit B56 family. In terms of assembly, PP2A consists of a common heterodimeric core enzyme, composed of a 36 kDa catalytic subunit (subunit C) and a 65 kDa constant regulatory subunit (PR65 or subunit A), that associates with a variety of regulatory subunits. Proteins that associate with the core dimer include three families of regulatory subunits B (the R2/B/PR55/B55, R3/B''/PR72/PR130/PR59 and R5/B'/B56 families), the 48 kDa variable regulatory subunit, viral proteins, and cell signaling molecules. Interacts with SGO1. Widely expressed with highest levels in thymus and ovary.

It localises to the cytoplasm. The protein resides in the nucleus. The protein localises to the chromosome. It is found in the centromere. Its function is as follows. The B regulatory subunit might modulate substrate selectivity and catalytic activity, and might also direct the localization of the catalytic enzyme to a particular subcellular compartment. This is Serine/threonine-protein phosphatase 2A 56 kDa regulatory subunit alpha isoform (Ppp2r5a) from Mus musculus (Mouse).